The following is a 273-amino-acid chain: Proteasome subunit beta type-10 (273 aa).

An N-acetylmethionine modification is found at methionine 1. The propeptide at 1-39 is removed in mature form; the sequence is MQKTVLEPQRGFSFENCERNAALQRALPGLRVPHARKTG. Threonine 40 serves as the catalytic Nucleophile. Serine 230 carries the phosphoserine modification.

The protein belongs to the peptidase T1B family. The 26S proteasome consists of a 20S proteasome core and two 19S regulatory subunits. The 20S proteasome core is composed of 28 subunits that are arranged in four stacked rings, resulting in a barrel-shaped structure. The two end rings are each formed by seven alpha subunits, and the two central rings are each formed by seven beta subunits. The catalytic chamber with the active sites is on the inside of the barrel. Component of the immunoproteasome, where it displaces the equivalent housekeeping subunit PSMB7. Component of the spermatoproteasome, a form of the proteasome specifically found in testis. In terms of processing, autocleaved. The resulting N-terminal Thr residue of the mature subunit is responsible for the nucleophile proteolytic activity.

The protein localises to the cytoplasm. It localises to the nucleus. The catalysed reaction is Cleavage of peptide bonds with very broad specificity.. Its function is as follows. The proteasome is a multicatalytic proteinase complex which is characterized by its ability to cleave peptides with Arg, Phe, Tyr, Leu, and Glu adjacent to the leaving group at neutral or slightly basic pH. The proteasome has an ATP-dependent proteolytic activity. This subunit is involved in antigen processing to generate class I binding peptides. This is Proteasome subunit beta type-10 (PSMB10) from Bos taurus (Bovine).